The primary structure comprises 614 residues: MMAADIPRVTTPLSSLVQVPQEEDRQEEEVTTMILEDDSWVQEAVLQEDGPESEPFPQSAGKGGPQEEVTRGPQGALGRLRELCRRWLRPEVHTKEQMLTMLPKEIQAWLQEHRPESSEEAAALVEDLTQTLQDSDFEIQSENGENCNQDMFENESRKIFSEMPEGESAQHSDGESDFERDAGIQRLQGHSPGEDHGEVVSQDREVGQLIGLQGTYLGEKPYECPQCGKTFSRKSHLITHERTHTGEKYYKCDECGKSFSDGSNFSRHQTTHTGEKPYKCRDCGKSFSRSANLITHQRIHTGEKPFQCAECGKSFSRSPNLIAHQRTHTGEKPYSCPECGKSFGNRSSLNTHQGIHTGEKPYECKECGESFSYNSNLIRHQRIHTGEKPYKCTDCGQRFSQSSALITHRRTHTGEKPYQCSECGKSFSRSSNLATHRRTHMVEKPYKCGVCGKSFSQSSSLIAHQGMHTGEKPYECLTCGESFSWSSNLLKHQRIHTGEKPYKCSECGKCFSQRSQLVVHQRTHTGEKPYKCLMCGKSFSRGSILVMHQRAHLGDKPYRCPECGKGFSWNSVLIIHQRIHTGEKPYKCPECGKGFSNSSNFITHQRTHMKEKLY.

Disordered stretches follow at residues methionine 1 to glutamine 26 and glutamate 43 to alanine 76. The 74-residue stretch at serine 59 to leucine 132 folds into the SCAN box domain. 14 consecutive C2H2-type zinc fingers follow at residues tyrosine 222–histidine 244, tyrosine 250–histidine 272, tyrosine 278–histidine 300, phenylalanine 306–histidine 328, tyrosine 334–histidine 356, tyrosine 362–histidine 384, tyrosine 390–histidine 412, tyrosine 418–histidine 440, tyrosine 446–histidine 468, tyrosine 474–histidine 496, tyrosine 502–histidine 524, tyrosine 530–histidine 552, tyrosine 558–histidine 580, and tyrosine 586–histidine 608.

The protein belongs to the krueppel C2H2-type zinc-finger protein family.

Its subcellular location is the nucleus. In terms of biological role, may be involved in transcriptional regulation during the post-meiotic stages of spermatogenesis. The chain is Zinc finger and SCAN domain-containing protein 2 (ZSCAN2) from Homo sapiens (Human).